We begin with the raw amino-acid sequence, 757 residues long: Subtilisin-like protease SBT1.7 (757 aa).

An N-terminal signal peptide occupies residues 1–24; it reads MSSSFLSSTAFFLLLCLGFCHVSS. Residues 25–106 constitute a propeptide that is removed on maturation; it reads SSSDQGTYIV…VLPEHRYELH (82 aa). The Inhibitor I9 domain maps to 31–106; the sequence is TYIVHMAKSQ…VLPEHRYELH (76 aa). Positions 102–610 constitute a Peptidase S8 domain; sequence RYELHTTRTP…AGHVSPTTAT (509 aa). The active-site Charge relay system is the Asp-139. Residue Asn-170 is glycosylated (N-linked (GlcNAc...) asparagine). Positions 196–219 are disordered; the sequence is PIDESKESRSPRDDDGHGTHTSST. Residues 198-213 show a composition bias toward basic and acidic residues; that stretch reads DESKESRSPRDDDGHG. Catalysis depends on His-212, which acts as the Charge relay system. N-linked (GlcNAc...) asparagine glycans are attached at residues Asn-352, Asn-376, and Asn-379. The active-site Charge relay system is the Ser-542. Residues Asn-631 and Asn-644 are each glycosylated (N-linked (GlcNAc...) asparagine).

It belongs to the peptidase S8 family. As to expression, expressed in immature siliques and at lower levels in stems and flowers. Widely expressed at low levels.

Its subcellular location is the secreted. The protein localises to the cell wall. With respect to regulation, activated by calcium. Inhibited by the serine protease inhibitors 4-(2-aminoethyl)benzenesulphonyl fluoride (AEBSF), PMSF, di-isopropyl phosphofluoridate (DFP) and soybean trypsin inhibitor (SBTI). Not inhibited by benzamidine or iodoacetamide. Leupeptin and pepstatin A have a minor inhibitory action. Functionally, serine protease. Has a substrate preference for the hydrophobic residues Phe and Ala and the basic residue Asp in the P1 position, and for Asp, Leu or Ala in the P1' position. Essential for mucilage release from seed coats. Triggers the accumulation and/or activation of cell wall modifying enzymes necessary either for the loosening of the outer primary cell wall, or to facilitate swelling of the mucilage. This is Subtilisin-like protease SBT1.7 from Arabidopsis thaliana (Mouse-ear cress).